A 520-amino-acid chain; its full sequence is MSNISTDLQDVEKIIVLDYGSQYNQLISRRIREIGVFSELKSHKISAAEVREVNPVGIILSGGPNSVYEDGSFDIDPEIFELGIPILGICYGMQLLTHKLGGKVVPAGDAGNREYGQSTLTHTPSALFESTPDEQTVLMSHGDAVTEIPADFVRTGTSADCPYAAIENPDKHIYGIQFHPEVRHSVYGNDILRNFALNICKAKGDWSMDNFIDMQIKKIRKTVGDKRVLLGLSGGVDSSVVGVLLQKAIGDQLICIFVDHGLLRKGEADQVMDMLGGKFGLNIVKADAAKRFLDKLAGVSDPEQKRKIIGNEFVYVFDDEASKLKDVKFLAQGTLYTDVIESGTDTAQTIKSHHNVGGLPEDMQFELIEPLNTLYKDEVRALGTELGMPDHIVWRQPFPGPGLAIRVMGEITEEKLETVRESDAILREEIAKAGLDRDIWQYFTVNTGVRSVGVMGDGRTYDYTIAIRAITSIDGMTADFAKIPWEVLQKISVRIVNEVDHVNRIVYDITSKPPATVEWE.

The Glutamine amidotransferase type-1 domain maps to 13–205; the sequence is KIIVLDYGSQ…ALNICKAKGD (193 aa). The active-site Nucleophile is the cysteine 90. Residues histidine 179 and glutamate 181 contribute to the active site. In terms of domain architecture, GMPS ATP-PPase spans 206–395; it reads WSMDNFIDMQ…LGMPDHIVWR (190 aa). 233-239 lines the ATP pocket; that stretch reads SGGVDSS.

As to quaternary structure, homodimer.

It carries out the reaction XMP + L-glutamine + ATP + H2O = GMP + L-glutamate + AMP + diphosphate + 2 H(+). It participates in purine metabolism; GMP biosynthesis; GMP from XMP (L-Gln route): step 1/1. In terms of biological role, catalyzes the synthesis of GMP from XMP. This chain is GMP synthase [glutamine-hydrolyzing], found in Streptococcus pneumoniae (strain CGSP14).